The following is a 400-amino-acid chain: MIRRLAALSALSGLATAWLPEVNKKITSTNGTNLFSSSNGKIRGVNLGSQFVFEPWIAEKAWSDMGCGGQKSEFDCVSSLGQAKANGAFASHWGSWITQDDLAEMVSYGLNTIRVPVGYWMREDLVYSDSEHFPQGGLQYLENLCGWASDAGLYIIIDLHGAPGAQTPQNPFTGQYAPTAGFYQDYQFERALKFLEWMTTNIHQNDKFRNVGMLEVVNEPVQDAGKVGSMRSTYYPNAFKRIRAAEQSLNIDRNNYLHIQMMDRLWGSGDPNESLTDTYYAAYDDHRYLKWAGVAVSKDSYISTSCSDQLNSNTPTIVGEWSLSVPDSVQWNSDWAPDSNKDFYKKWFAAQVTAYEKQQGWIFWTWKAQLGDYRWSYQDAVAAGVIPTDLNSLAGLKVCG.

An N-terminal signal peptide occupies residues 1-17 (MIRRLAALSALSGLATA). N-linked (GlcNAc...) asparagine glycosylation occurs at asparagine 30. Glutamate 219 acts as the Proton donor in catalysis. N-linked (GlcNAc...) asparagine glycosylation is present at asparagine 272. The active-site Nucleophile is the glutamate 320.

Belongs to the glycosyl hydrolase 5 (cellulase A) family.

It is found in the secreted. The catalysed reaction is Random hydrolysis of (1-&gt;6)-linkages in (1-&gt;6)-beta-D-glucans.. Its function is as follows. Beta-glucanases participate in the metabolism of beta-glucan, the main structural component of the cell wall. Acts on lutean, pustulan and 1,6-oligo-beta-D-glucosides. In Neosartorya fischeri (strain ATCC 1020 / DSM 3700 / CBS 544.65 / FGSC A1164 / JCM 1740 / NRRL 181 / WB 181) (Aspergillus fischerianus), this protein is Probable glucan endo-1,6-beta-glucosidase B (exgB).